The sequence spans 279 residues: Energy-coupling factor transporter ATP-binding protein EcfA2 (279 aa).

In terms of domain architecture, ABC transporter spans 3–245; the sequence is IALENVNFIY…VVFMEEVQLG (243 aa). 40-47 provides a ligand contact to ATP; the sequence is GHTGSGKS.

It belongs to the ABC transporter superfamily. Energy-coupling factor EcfA family. Forms a stable energy-coupling factor (ECF) transporter complex composed of 2 membrane-embedded substrate-binding proteins (S component), 2 ATP-binding proteins (A component) and 2 transmembrane proteins (T component).

The protein localises to the cell membrane. ATP-binding (A) component of a common energy-coupling factor (ECF) ABC-transporter complex. Unlike classic ABC transporters this ECF transporter provides the energy necessary to transport a number of different substrates. The protein is Energy-coupling factor transporter ATP-binding protein EcfA2 of Streptococcus pneumoniae serotype 2 (strain D39 / NCTC 7466).